Here is a 316-residue protein sequence, read N- to C-terminus: Succinoglycan biosynthesis protein ExoV (316 aa).

It functions in the pathway glycan metabolism; exopolysaccharide biosynthesis. The polypeptide is Succinoglycan biosynthesis protein ExoV (exoV) (Rhizobium meliloti (strain 1021) (Ensifer meliloti)).